Here is a 289-residue protein sequence, read N- to C-terminus: Heme oxygenase 1 (289 aa).

Residues 1–12 (MERPQPDSSMPQ) show a composition bias toward polar residues. The interval 1–24 (MERPQPDSSMPQDLSEALKEATKE) is disordered. Topologically, residues 1 to 266 (MERPQPDSSM…KPQPSVLSQA (266 aa)) are cytoplasmic. Residues K19, H26, Y135, and R184 each contribute to the heme b site. Residues 239 to 261 (RRAGSKVQDLAPTKASRGKPQPS) are disordered. The residue at position 243 (S243) is a Phosphoserine. The helical; Anchor for type IV membrane protein transmembrane segment at 267-289 (PLLRWVLTLSFLVATVAVGLYAM) threads the bilayer.

The protein belongs to the heme oxygenase family. In terms of assembly, homodimer and higher order homooligomer. Oligomerization is crucial for its stability and function in the endoplasmic reticulum. Interacts with FLVCR2; this interaction is potentiated in the presence of heme. In terms of processing, a soluble form arises by proteolytic removal of the membrane anchor.

It is found in the endoplasmic reticulum membrane. It catalyses the reaction heme b + 3 reduced [NADPH--hemoprotein reductase] + 3 O2 = biliverdin IXalpha + CO + Fe(2+) + 3 oxidized [NADPH--hemoprotein reductase] + 3 H2O + H(+). Its activity is regulated as follows. Inhibited by metalloporphyrins such as Sn-, Co-, Mn- and Zn-protoporphyrins. Its function is as follows. Catalyzes the oxidative cleavage of heme at the alpha-methene bridge carbon, released as carbon monoxide (CO), to generate biliverdin IXalpha, while releasing the central heme iron chelate as ferrous iron. Affords protection against programmed cell death and this cytoprotective effect relies on its ability to catabolize free heme and prevent it from sensitizing cells to undergo apoptosis. Catalyzes the oxidative cleavage of heme at the alpha-methene bridge carbon, released as carbon monoxide (CO), to generate biliverdin IXalpha, while releasing the central heme iron chelate as ferrous iron. In Bos taurus (Bovine), this protein is Heme oxygenase 1 (HMOX1).